Reading from the N-terminus, the 285-residue chain is Heterogeneous nuclear rnp K-like protein 2 (285 aa).

3 KH domains span residues T9–V73, I113–I178, and S205–L270.

This sequence belongs to the HEK2 family. In terms of assembly, binds RNA.

The protein resides in the cytoplasm. It localises to the P-body. It is found in the nucleus. Its subcellular location is the chromosome. The protein localises to the telomere. In terms of biological role, RNA-binding protein involved in the correct localization of transcripts in the cell. RNA localization is a widespread mechanism for achieving localized protein synthesis. Involved in structural and functional organization of telomeric chromatin and regulates silencing at the HMR locus. The chain is Heterogeneous nuclear rnp K-like protein 2 (HEK2) from Lachancea thermotolerans (strain ATCC 56472 / CBS 6340 / NRRL Y-8284) (Yeast).